Here is an 83-residue protein sequence, read N- to C-terminus: Putative beta-neurotoxin RjAa15f (83 aa).

An N-terminal signal peptide occupies residues 1–18 (MKILIFIIASFMLIGVEC). The LCN-type CS-alpha/beta domain occupies 19 to 82 (KEGYPMGRNG…VWDSSNNKCV (64 aa)). 4 cysteine pairs are disulfide-bonded: C29-C81, C33-C55, C40-C62, and C44-C64.

This sequence belongs to the long (4 C-C) scorpion toxin superfamily. Sodium channel inhibitor family. Beta subfamily. As to expression, expressed by the venom gland.

The protein localises to the secreted. Beta toxins bind voltage-independently at site-4 of sodium channels (Nav) and shift the voltage of activation toward more negative potentials thereby affecting sodium channel activation and promoting spontaneous and repetitive firing. The chain is Putative beta-neurotoxin RjAa15f from Rhopalurus junceus (Caribbean blue scorpion).